Consider the following 338-residue polypeptide: Ketol-acid reductoisomerase (NADP(+)) (338 aa).

The KARI N-terminal Rossmann domain occupies 1 to 181; it reads MNVFYDKDAD…GGGRAGIIET (181 aa). NADP(+) is bound by residues 24-27, R47, and S52; that span reads YGSQ. H107 is a catalytic residue. G133 serves as a coordination point for NADP(+). One can recognise a KARI C-terminal knotted domain in the interval 182-327; that stretch reads NFREETETDL…AKLRAMMPWI (146 aa). D190, E194, E226, and E230 together coordinate Mg(2+). S251 is a substrate binding site.

It belongs to the ketol-acid reductoisomerase family. Requires Mg(2+) as cofactor.

The catalysed reaction is (2R)-2,3-dihydroxy-3-methylbutanoate + NADP(+) = (2S)-2-acetolactate + NADPH + H(+). The enzyme catalyses (2R,3R)-2,3-dihydroxy-3-methylpentanoate + NADP(+) = (S)-2-ethyl-2-hydroxy-3-oxobutanoate + NADPH + H(+). The protein operates within amino-acid biosynthesis; L-isoleucine biosynthesis; L-isoleucine from 2-oxobutanoate: step 2/4. Its pathway is amino-acid biosynthesis; L-valine biosynthesis; L-valine from pyruvate: step 2/4. Involved in the biosynthesis of branched-chain amino acids (BCAA). Catalyzes an alkyl-migration followed by a ketol-acid reduction of (S)-2-acetolactate (S2AL) to yield (R)-2,3-dihydroxy-isovalerate. In the isomerase reaction, S2AL is rearranged via a Mg-dependent methyl migration to produce 3-hydroxy-3-methyl-2-ketobutyrate (HMKB). In the reductase reaction, this 2-ketoacid undergoes a metal-dependent reduction by NADPH to yield (R)-2,3-dihydroxy-isovalerate. The protein is Ketol-acid reductoisomerase (NADP(+)) of Burkholderia cenocepacia (strain HI2424).